The following is a 350-amino-acid chain: 2,5-dihydroxypyridine 5,6-dioxygenase (350 aa).

Histidine 265, histidine 318, and aspartate 320 together coordinate Fe cation.

The cofactor is Fe(2+).

It catalyses the reaction 2,5-dihydroxypyridine + O2 = N-formylmaleamate + H(+). It participates in cofactor degradation; nicotinate degradation. Functionally, catalyzes the dioxygenolytic ring cleavage of 2,5-dihydroxypyridine between carbons 5 and 6 generating N-formylmaleamate in the aerobic nicotinate degradation pathway. The polypeptide is 2,5-dihydroxypyridine 5,6-dioxygenase (nicX) (Pseudomonas putida (strain ATCC 47054 / DSM 6125 / CFBP 8728 / NCIMB 11950 / KT2440)).